We begin with the raw amino-acid sequence, 146 residues long: Prostaglandin E synthase 3 (146 aa).

The region spanning V1–T76 is the CS domain. Residues S110 to E146 are disordered. Acidic residues predominate over residues G118–D139.

The protein belongs to the p23/wos2 family. As to quaternary structure, binds to telomerase. Binds to the progesterone receptor.

Its subcellular location is the cytoplasm. The enzyme catalyses prostaglandin H2 = prostaglandin E2. It functions in the pathway lipid metabolism; prostaglandin biosynthesis. In terms of biological role, molecular chaperone. The protein is Prostaglandin E synthase 3 (PTGES3) of Gallus gallus (Chicken).